The primary structure comprises 51 residues: uncharacterized protein (51 aa).

This is an uncharacterized protein from Bacillus subtilis (strain 168).